The sequence spans 113 residues: Putative membrane protein insertion efficiency factor (113 aa).

It belongs to the UPF0161 family.

It localises to the cell inner membrane. In terms of biological role, could be involved in insertion of integral membrane proteins into the membrane. The polypeptide is Putative membrane protein insertion efficiency factor (Campylobacter curvus (strain 525.92)).